Consider the following 320-residue polypeptide: Thymidine kinase (320 aa).

10-17 lines the ATP pocket; sequence GAYDTGKS. Glu33 functions as the Proton acceptor in the catalytic mechanism. Substrate contacts are provided by Tyr51 and Gln75. Arg162 contacts ATP. Substrate is bound at residue Arg168.

The protein belongs to the herpesviridae thymidine kinase family. In terms of assembly, homodimer.

It catalyses the reaction thymidine + ATP = dTMP + ADP + H(+). Functionally, catalyzes the transfer of the gamma-phospho group of ATP to thymidine to generate dTMP in the salvage pathway of pyrimidine synthesis. The dTMP serves as a substrate for DNA polymerase during viral DNA replication. Allows the virus to be reactivated and to grow in non-proliferative cells lacking a high concentration of phosphorylated nucleic acid precursors. In Suid herpesvirus 1 (strain NIA-3) (SuHV-1), this protein is Thymidine kinase.